The following is a 182-amino-acid chain: Neuropeptide CCHamide-1 (182 aa).

The signal sequence occupies residues 1-22 (MWYSKCSWTLVVLVALFALVTG). Residues cysteine 24 and cysteine 31 are joined by a disulfide bond. Histidine 35 is subject to Histidine amide. The propeptide occupies 39-182 (SGGKAVIDAK…ENYSGYELTK (144 aa)). Disordered regions lie at residues 67 to 103 (NNNNNNQNNQDDDNNDDDSNRNTNANSANNIPLAAPA) and 133 to 154 (QLQDQQQQGRGRGGQGQYDAAA). Positions 87–103 (RNTNANSANNIPLAAPA) are enriched in low complexity. Asparagine 174 carries N-linked (GlcNAc...) asparagine glycosylation.

As to expression, expressed in endocrine cells of the larval midgut (at protein level). In the brain, expressed in the optic lobes, lateral protocerebrum, subesophageal ganglion, and intermediate and superior medial protocerebrum (at protein level). Expressed in DN1a neurons but not in other clock neurons and expression follows a rhythmic pattern controlled by the circadian clock (at protein level). In the posterior midgut, expressed in enteroendocrine cells (at protein level). Low levels in larval brain with higher levels in larval and adult gut and adult brain.

It localises to the secreted. Its function is as follows. Neuropeptide ligand for the CCHamide-1 receptor CCHa1-R. Neuromessenger mediating signaling between neuronal cells of the circadian clock network involved in regulation of sleep latency (the time required to fall asleep), amount of sleep and depth of sleep (arousability). Together with PDF, involved in regulating intensity and periodicity of daytime activity. In subsets of clock neurons modulates the rhythmic expression of PDP1 and PDF, and together with PDF modulates the rhythmic expression of circadian protein PER/period, but not TIM/timeless. Mediates signaling from DN1a (anterior dorsal neurons 1) clock neurons to s-LNv (small ventral lateral neurons) clock neurons through CCHa1-R, contributing to regulation of activity rhythms by the circadian clock, particularly in the morning. May be involved in signaling between clock neurons and non-clock neurons, such as the fan-shaped body, involved in sleep homeostasis. In response to a high protein diet mediates hormonal signaling between the gut and a CCHa1-R expressing subset of dopaminergic cells in the protocerebral anterior medial (PAM) cluster of the brain. This suppresses arousability by mechano-sensory stimulation (but not thermal stimulation) but is not involved in regulation of sleep patterns. This Drosophila melanogaster (Fruit fly) protein is Neuropeptide CCHamide-1.